A 377-amino-acid polypeptide reads, in one-letter code: Malate dehydrogenase, cytoplasmic (377 aa).

Residues 2–5 carry the Pro/N-degron motif; sequence PHSV. A Phosphothreonine modification is found at T6. NAD(+) is bound by residues 20–26 and D57; that span reads GAAGGIG. 2 residues coordinate substrate: R106 and R112. NAD(+)-binding positions include N119 and 144 to 146; that span reads ISN. Substrate is bound by residues N146 and R185. H215 serves as the catalytic Proton acceptor. NAD(+) is bound at residue M266.

Belongs to the LDH/MDH superfamily. MDH type 1 family. As to quaternary structure, homodimer. Post-translationally, targeted for proteasomal degradation when cells are shifted to glucose-containing growth medium.

It is found in the cytoplasm. The enzyme catalyses (S)-malate + NAD(+) = oxaloacetate + NADH + H(+). In terms of biological role, the isoenzyme MDH2 may function primarily in the glyoxylate cycle. This Saccharomyces cerevisiae (strain ATCC 204508 / S288c) (Baker's yeast) protein is Malate dehydrogenase, cytoplasmic (MDH2).